The chain runs to 135 residues: MNRDIGKNAERELVSILRGEGFNAVRIPTSNSSPNPLPDIFATKENTLLSIECKSTWENKVKVKENQVRKLFEFLSMFTMSGIPIIAVKFKQIHEWRVLIPKKAEDIVVTIDNTISIEDLFKILEKSVEEKILTP.

3 residues coordinate Mg(2+): Glu10, Asp39, and Glu52.

This sequence belongs to the Holliday junction resolvase Hjc family. Hje subfamily. Homodimer. Mg(2+) is required as a cofactor.

The enzyme catalyses Endonucleolytic cleavage at a junction such as a reciprocal single-stranded crossover between two homologous DNA duplexes (Holliday junction).. A structure-specific endonuclease that resolves Holliday junction (HJ) intermediates during genetic recombination. Acts only on 4-way DNA junctions in a sequence non-specific manner; introduces paired nicks in opposing strands 2 bases 3' of the point of strand exchange only on continuous strands of 4-way junction DNA. Cleaves both mobile and immobile junctions. Plays a more direct role in DNA repair than Hjc. Overexpression of this protein decreases the growth rate, and leads to genomic instability, and global transcriptomic changes. The polypeptide is Crossover junction endodeoxyribonuclease Hje (Saccharolobus islandicus (strain REY15A) (Sulfolobus islandicus)).